Consider the following 486-residue polypeptide: Maintenance of mitochondrial morphology protein 1 (486 aa).

Residues 1 to 20 are Lumenal-facing; the sequence is MNFQQSAIPPFSFLLSFTQG. A helical transmembrane segment spans residues 21–41; it reads FLLGQLSVVLLIGAFIKFFIF. Residues 42-486 are Cytoplasmic-facing; that stretch reads GEAPPPPSRG…GSLPDGAVGN (445 aa). 3 disordered regions span residues 70-96, 271-320, and 387-486; these read TNEA…SSST, TPPL…SPKS, and RTGV…AVGN. Over residues 83–96 the composition is skewed to polar residues; it reads STSNVLRPVPSSST. An SMP-LTD domain is found at 128–379; that stretch reads QPESLDWFNV…EPRVQVVGLP (252 aa). The segment covering 271–282 has biased composition (pro residues); the sequence is TPPLHTPSPSPA. Residues 292–306 are compositionally biased toward low complexity; it reads QSQPENNSSNPNQQS. Polar residues-rich tracts occupy residues 398–407 and 440–450; these read TGSNAASRSA and DSVSRSSSFNV. Residues 460 to 474 are compositionally biased toward basic and acidic residues; it reads MTREDSRGAISDDFH.

The protein belongs to the MMM1 family. Homodimer. Component of the ER-mitochondria encounter structure (ERMES) or MDM complex, composed of mmm1, mdm10, mdm12 and mdm34. A mmm1 homodimer associates with one molecule of mdm12 on each side in a pairwise head-to-tail manner, and the SMP-LTD domains of mmm1 and mdm12 generate a continuous hydrophobic tunnel for phospholipid trafficking.

It localises to the endoplasmic reticulum membrane. Its function is as follows. Component of the ERMES/MDM complex, which serves as a molecular tether to connect the endoplasmic reticulum (ER) and mitochondria. Components of this complex are involved in the control of mitochondrial shape and protein biogenesis, and function in nonvesicular lipid trafficking between the ER and mitochondria. The mdm12-mmm1 subcomplex functions in the major beta-barrel assembly pathway that is responsible for biogenesis of all outer membrane beta-barrel proteins, and acts in a late step after the SAM complex. The mdm10-mdm12-mmm1 subcomplex further acts in the TOM40-specific pathway after the action of the mdm12-mmm1 complex. Essential for establishing and maintaining the structure of mitochondria and maintenance of mtDNA nucleoids. The sequence is that of Maintenance of mitochondrial morphology protein 1 from Aspergillus terreus (strain NIH 2624 / FGSC A1156).